A 211-amino-acid polypeptide reads, in one-letter code: tRNA (guanine-N(7)-)-methyltransferase (211 aa).

The S-adenosyl-L-methionine site is built by Glu-44, Asp-69, Asp-96, and Asp-118. Asp-118 is a catalytic residue. Lys-122 provides a ligand contact to substrate. Residues 124 to 129 (KHEKRR) are interaction with RNA. Substrate-binding positions include Asp-154 and 191–194 (TEYE).

It belongs to the class I-like SAM-binding methyltransferase superfamily. TrmB family.

The enzyme catalyses guanosine(46) in tRNA + S-adenosyl-L-methionine = N(7)-methylguanosine(46) in tRNA + S-adenosyl-L-homocysteine. Its pathway is tRNA modification; N(7)-methylguanine-tRNA biosynthesis. In terms of biological role, catalyzes the formation of N(7)-methylguanine at position 46 (m7G46) in tRNA. The polypeptide is tRNA (guanine-N(7)-)-methyltransferase (Streptococcus pyogenes serotype M18 (strain MGAS8232)).